The sequence spans 364 residues: Aminomethyltransferase (364 aa).

It belongs to the GcvT family. The glycine cleavage system is composed of four proteins: P, T, L and H.

The enzyme catalyses N(6)-[(R)-S(8)-aminomethyldihydrolipoyl]-L-lysyl-[protein] + (6S)-5,6,7,8-tetrahydrofolate = N(6)-[(R)-dihydrolipoyl]-L-lysyl-[protein] + (6R)-5,10-methylene-5,6,7,8-tetrahydrofolate + NH4(+). In terms of biological role, the glycine cleavage system catalyzes the degradation of glycine. This chain is Aminomethyltransferase, found in Shigella flexneri.